Reading from the N-terminus, the 464-residue chain is Keratin, type I cytoskeletal 28 (464 aa).

The interval 1–85 (MSLQFSNGSR…GSEGGLLSGN (85 aa)) is head. A coil 1A region spans residues 86 to 121 (EKVTMQNLNDRLASYLDNVRALEEANAELERKIKGW). In terms of domain architecture, IF rod spans 86–401 (EKVTMQNLND…RLIDGDGNSC (316 aa)). Residues 122–143 (YEKYGPGSCRGLDHDYSRYHLT) are linker 1. Residues 144 to 235 (IEDLKNKIIS…KNHEEEMKAL (92 aa)) are coil 1B. The segment at 236-258 (QCAAGGNVNVEMNAAPGVDLAVL) is linker 12. Positions 259–397 (LNNMRAEYEA…ETYCRLIDGD (139 aa)) are coil 2. The segment at 398-464 (GNSCSKSKGF…NGKTEQRVPF (67 aa)) is tail. The disordered stretch occupies residues 443 to 464 (IHSIEEKTSKMTNGKTEQRVPF).

The protein belongs to the intermediate filament family. As to quaternary structure, heterotetramer of two type I and two type II keratins. As to expression, strongly expressed in skin and scalp, and weak expression observed in thymus. In the hair follicle, expressed in Henle layer, Huxley layer and in the irs cuticle. Expression extends from the bulb region up to the point of differentiation into the three layers. Also present in the medulla of beard hair (at protein level).

It is found in the cytoplasm. In terms of biological role, essential for the proper assembly of types I and II keratin protein complexes and the formation of keratin intermediate filaments in the inner root sheath (irs). In Homo sapiens (Human), this protein is Keratin, type I cytoskeletal 28.